We begin with the raw amino-acid sequence, 157 residues long: Transcription elongation factor GreA (157 aa).

A coiled-coil region spans residues 17–37 (ELERLLKLRPQISEAIAEARE).

Belongs to the GreA/GreB family.

Necessary for efficient RNA polymerase transcription elongation past template-encoded arresting sites. The arresting sites in DNA have the property of trapping a certain fraction of elongating RNA polymerases that pass through, resulting in locked ternary complexes. Cleavage of the nascent transcript by cleavage factors such as GreA or GreB allows the resumption of elongation from the new 3'terminus. GreA releases sequences of 2 to 3 nucleotides. This Vibrio parahaemolyticus serotype O3:K6 (strain RIMD 2210633) protein is Transcription elongation factor GreA.